Here is a 431-residue protein sequence, read N- to C-terminus: Putative helicase 055L (431 aa).

A Helicase ATP-binding domain is found at tryptophan 73 to aspartate 222. Residue cysteine 86–threonine 93 coordinates ATP. A DEAH box motif is present at residues aspartate 175–histidine 178. The segment at lysine 403–arginine 431 is disordered. Residues serine 407–proline 424 are compositionally biased toward low complexity.

The chain is Putative helicase 055L from Frog virus 3 (isolate Goorha) (FV-3).